A 249-amino-acid polypeptide reads, in one-letter code: 1-(5-phosphoribosyl)-5-[(5-phosphoribosylamino)methylideneamino] imidazole-4-carboxamide isomerase (249 aa).

Asp8 functions as the Proton acceptor in the catalytic mechanism. Asp131 (proton donor) is an active-site residue.

The protein belongs to the HisA/HisF family.

It localises to the cytoplasm. It carries out the reaction 1-(5-phospho-beta-D-ribosyl)-5-[(5-phospho-beta-D-ribosylamino)methylideneamino]imidazole-4-carboxamide = 5-[(5-phospho-1-deoxy-D-ribulos-1-ylimino)methylamino]-1-(5-phospho-beta-D-ribosyl)imidazole-4-carboxamide. The protein operates within amino-acid biosynthesis; L-histidine biosynthesis; L-histidine from 5-phospho-alpha-D-ribose 1-diphosphate: step 4/9. This Leptothrix cholodnii (strain ATCC 51168 / LMG 8142 / SP-6) (Leptothrix discophora (strain SP-6)) protein is 1-(5-phosphoribosyl)-5-[(5-phosphoribosylamino)methylideneamino] imidazole-4-carboxamide isomerase.